Here is a 232-residue protein sequence, read N- to C-terminus: uncharacterized protein (232 aa).

A coiled-coil region spans residues 89–140 (EFGTWQRRKNSLEDSLREVMKRRGELQDQLTAELGAIERMQTDLVGARQTLD).

This is an uncharacterized protein from Mycobacterium leprae (strain TN).